Reading from the N-terminus, the 103-residue chain is Large ribosomal subunit protein uL24 (103 aa).

Belongs to the universal ribosomal protein uL24 family. In terms of assembly, part of the 50S ribosomal subunit.

Its function is as follows. One of two assembly initiator proteins, it binds directly to the 5'-end of the 23S rRNA, where it nucleates assembly of the 50S subunit. In terms of biological role, one of the proteins that surrounds the polypeptide exit tunnel on the outside of the subunit. The protein is Large ribosomal subunit protein uL24 of Haemophilus influenzae (strain PittEE).